Reading from the N-terminus, the 662-residue chain is Chaperone protein dnaK1 (662 aa).

Thr198 is subject to Phosphothreonine; by autocatalysis. The disordered stretch occupies residues 630-662; that stretch reads DWDDDPWAAPSGPPRGRSLNRRDRDPWDDDFYR. Residues 649–662 show a composition bias toward basic and acidic residues; it reads NRRDRDPWDDDFYR.

The protein belongs to the heat shock protein 70 family.

Functionally, acts as a chaperone. This is Chaperone protein dnaK1 (dnaK1) from Parasynechococcus marenigrum (strain WH8102).